The sequence spans 269 residues: Small ribosomal subunit protein eS1 (269 aa).

A disordered region spans residues 1-20; the sequence is MAVGKNKGVSKGGKKGSKKK.

This sequence belongs to the eukaryotic ribosomal protein eS1 family. In terms of assembly, component of the small ribosomal subunit. Mature ribosomes consist of a small (40S) and a large (60S) subunit. The 40S subunit contains about 33 different proteins and 1 molecule of RNA (18S). The 60S subunit contains about 49 different proteins and 3 molecules of RNA (28S, 5.8S and 5S).

It localises to the cytoplasm. Functionally, has an essential role in oogenesis. The protein is Small ribosomal subunit protein eS1 of Anopheles gambiae (African malaria mosquito).